The chain runs to 166 residues: NAD(P)H-quinone oxidoreductase subunit I, chloroplastic (166 aa).

4Fe-4S ferredoxin-type domains lie at 55 to 84 and 95 to 124; these read GRIHFEFDKCIACEVCVRVCPIDLPVVDWK and LNYSIDFGICIFCGNCVEYCPTNCLSMTEE. C64, C67, C70, C74, C104, C107, C110, and C114 together coordinate [4Fe-4S] cluster.

It belongs to the complex I 23 kDa subunit family. As to quaternary structure, NDH is composed of at least 16 different subunits, 5 of which are encoded in the nucleus. [4Fe-4S] cluster is required as a cofactor.

The protein localises to the plastid. It is found in the chloroplast thylakoid membrane. It carries out the reaction a plastoquinone + NADH + (n+1) H(+)(in) = a plastoquinol + NAD(+) + n H(+)(out). It catalyses the reaction a plastoquinone + NADPH + (n+1) H(+)(in) = a plastoquinol + NADP(+) + n H(+)(out). Its function is as follows. NDH shuttles electrons from NAD(P)H:plastoquinone, via FMN and iron-sulfur (Fe-S) centers, to quinones in the photosynthetic chain and possibly in a chloroplast respiratory chain. The immediate electron acceptor for the enzyme in this species is believed to be plastoquinone. Couples the redox reaction to proton translocation, and thus conserves the redox energy in a proton gradient. This Chaetymenia peduncularis (Daisy) protein is NAD(P)H-quinone oxidoreductase subunit I, chloroplastic.